The chain runs to 470 residues: Calcitonin gene-related peptide type 1 receptor (470 aa).

The signal sequence occupies residues 1–23 (MTASCWTICLFLLGSVTEFIVLA). Residues 24–147 (SPEVNESQQQ…HTTEGRRTAM (124 aa)) lie on the Extracellular side of the membrane. N28, N74, N126, and N131 each carry an N-linked (GlcNAc...) asparagine glycan. Disulfide bonds link C56–C82, C73–C113, and C96–C135. The helical transmembrane segment at 148–172 (NLFYLALIGHGLSLTSLFISLGIFF) threads the bilayer. Topologically, residues 173–183 (HFKSLSCQRIT) are cytoplasmic. A helical membrane pass occupies residues 184-206 (LHKNLFFSFVLNSIITIIWLTAV). Residues 207 to 217 (ANNQELVQQNP) lie on the Extracellular side of the membrane. Residues 218–246 (ISCKISQFIHLYIFGCNYFWMLCEGIYLH) traverse the membrane as a helical segment. At 247 to 260 (TLIVVAVFAEKQHL) the chain is on the cytoplasmic side. The chain crosses the membrane as a helical span at residues 261 to 281 (MWYYLLGWGFPLIPATIHAVA). Topologically, residues 282–297 (RSYYYNDNCWISSNTS) are extracellular. An N-linked (GlcNAc...) asparagine glycan is attached at N295. The helical transmembrane segment at 298–322 (LLYIIHGPICAAMLVNLFFLLNIVR) threads the bilayer. Over 323–337 (VLITKLKVTHQAKSS) the chain is Cytoplasmic. The helical transmembrane segment at 338–359 (LYMKAVRATLILVPLLGIQYVL) threads the bilayer. Over 360-374 (LPYKPSGRVSAEIYD) the chain is Extracellular. Residues 375-395 (YIMHILMHYQGLLVATIFCFF) traverse the membrane as a helical segment. The Cytoplasmic portion of the chain corresponds to 396 to 470 (NGEVQAVLRR…AIIKPENPFA (75 aa)).

This sequence belongs to the G-protein coupled receptor 2 family.

It is found in the cell membrane. Functionally, may function as G protein-coupled receptor for calcitonin-gene-related peptides and adrenomedullin. Specificity may be modulated by accessory proteins. May activate cAMP-dependent pathway. The polypeptide is Calcitonin gene-related peptide type 1 receptor (calcrla) (Danio rerio (Zebrafish)).